The chain runs to 619 residues: Chaperone protein HscA homolog (619 aa).

It belongs to the heat shock protein 70 family.

In terms of biological role, chaperone involved in the maturation of iron-sulfur cluster-containing proteins. Has a low intrinsic ATPase activity which is markedly stimulated by HscB. In Pseudomonas paraeruginosa (strain DSM 24068 / PA7) (Pseudomonas aeruginosa (strain PA7)), this protein is Chaperone protein HscA homolog.